The chain runs to 236 residues: NLP effector protein 3 (236 aa).

Residues 1–19 (MNLLGFLAVVALSTASVQA) form the signal peptide. A Conserved undecapeptide motif I motif is present at residues 103–113 (AIMYSWYFPKD). The short motif at 120–126 (GHRHDWE) is the Hepta-peptide GHRHDWE motif II element.

Belongs to the Necrosis inducing protein (NPP1) family.

The protein resides in the secreted. Secreted effector that contributes to virulence during infection by P.capsici. Induces distinct chlorosis at 3 days after inoculation of host C.annuum leaves, and all the chlorotic areas gradually turn brown and become moderately necrotic at 7 days after inoculation. Leads only to chlorotic areas, without necrosis at 7 days after non-host N.benthamiana leaves infection. Induces cell death in hot pepper. The polypeptide is NLP effector protein 3 (Phytophthora capsici).